The following is a 73-amino-acid chain: Kazal peptide Pr13a (73 aa).

The N-terminal stretch at 1-20 (MKYIILFLVLIGLQANLALG) is a signal peptide. One can recognise a Kazal-like domain in the interval 21–73 (SKCKCDCTKYPYSPVCAKELKTGDTETFNNVCQLQCYNCTHMKNYVVIYSGSC). 3 cysteine pairs are disulfide-bonded: Cys-23–Cys-59, Cys-27–Cys-52, and Cys-36–Cys-73.

Expressed by the venom gland (anterior main gland) (at protein level).

The protein localises to the secreted. In terms of biological role, may act as a serine protease inhibitor, since it possess the kazal serine protease inhibitor signature. In Platymeris rhadamanthus (Red spot assassin bug), this protein is Kazal peptide Pr13a.